Consider the following 103-residue polypeptide: Small ribosomal subunit protein uS10 (103 aa).

It belongs to the universal ribosomal protein uS10 family. Part of the 30S ribosomal subunit.

Involved in the binding of tRNA to the ribosomes. The polypeptide is Small ribosomal subunit protein uS10 (Campylobacter hominis (strain ATCC BAA-381 / DSM 21671 / CCUG 45161 / LMG 19568 / NCTC 13146 / CH001A)).